Here is a 419-residue protein sequence, read N- to C-terminus: Transcription termination factor Rho (419 aa).

The 76-residue stretch at 48 to 123 (GFTCSGTLEI…VRLDSINGDH (76 aa)) folds into the Rho RNA-BD domain. Residues 169–174 (GKGQRA), 181–186 (KIGKTV), and R212 contribute to the ATP site.

It belongs to the Rho family. In terms of assembly, homohexamer. The homohexamer assembles into an open ring structure.

Functionally, facilitates transcription termination by a mechanism that involves Rho binding to the nascent RNA, activation of Rho's RNA-dependent ATPase activity, and release of the mRNA from the DNA template. The polypeptide is Transcription termination factor Rho (Neisseria gonorrhoeae).